Here is an 812-residue protein sequence, read N- to C-terminus: Ras guanine nucleotide exchange factor J (812 aa).

Composition is skewed to low complexity over residues 1–36 and 53–65; these read MSNP…NSKS and LLNR…NLNN. The segment at 1–146 is disordered; sequence MSNPVSINNS…GGSSGGLNMS (146 aa). Residues 75–86 are compositionally biased toward polar residues; the sequence is SFTSNYQNIYTP. Low complexity predominate over residues 87-101; sequence NNNSYNSSNNNNNNN. The span at 131–141 shows a compositional bias: gly residues; sequence NSGGGGGGSSG. The 33-residue stretch at 214–246 folds into the LisH domain; that stretch reads GRDTMLQLILQHLQFEGLMDSRKLLEEEARVQY. The interval 320–382 is disordered; it reads IIYVDDKEKE…NNSIGNSNSY (63 aa). Residues 323–343 are compositionally biased toward basic and acidic residues; that stretch reads VDDKEKEKEKEKEKEKEKDKF. The segment covering 344–382 has biased composition (low complexity); the sequence is GPNSTNSLSGSGSSPNIPSGMNNNSSSIGNNSIGNSNSY. In terms of domain architecture, N-terminal Ras-GEF spans 409–535; that stretch reads NKPQVKAASL…LSESLNAKIK (127 aa). Positions 573–804 constitute a Ras-GEF domain; that stretch reads DEEEIARQLT…YSRSMSFEPR (232 aa).

In terms of biological role, promotes the exchange of Ras-bound GDP by GTP. This is Ras guanine nucleotide exchange factor J (gefJ) from Dictyostelium discoideum (Social amoeba).